A 150-amino-acid polypeptide reads, in one-letter code: Transcriptional regulator MraZ (150 aa).

SpoVT-AbrB domains follow at residues 8-55 and 84-127; these read FINN…GISH and AVQL…QPQN.

This sequence belongs to the MraZ family. In terms of assembly, forms oligomers.

It is found in the cytoplasm. Its subcellular location is the nucleoid. This chain is Transcriptional regulator MraZ, found in Rickettsia bellii (strain OSU 85-389).